The primary structure comprises 242 residues: Small ribosomal subunit protein uS5 (242 aa).

The span at 1 to 14 (MADENSTGPGNQPE) shows a compositional bias: polar residues. Residues 1–65 (MADENSTGPG…DRRPRDEDGG (65 aa)) are disordered. Over residues 41 to 65 (DGGRGGRDGGRGRRDDRRPRDEDGG) the composition is skewed to basic and acidic residues. The S5 DRBM domain occupies 68-131 (LIEKLVHINR…AAAKKAMIRV (64 aa)). The tract at residues 204 to 242 (EQTSPKSVAQRRGKKVSDLIKRGGASDRAAEAEAAAVTE) is disordered. Over residues 218–234 (KVSDLIKRGGASDRAAE) the composition is skewed to basic and acidic residues.

This sequence belongs to the universal ribosomal protein uS5 family. Part of the 30S ribosomal subunit. Contacts proteins S4 and S8.

With S4 and S12 plays an important role in translational accuracy. In terms of biological role, located at the back of the 30S subunit body where it stabilizes the conformation of the head with respect to the body. The chain is Small ribosomal subunit protein uS5 from Sphingopyxis alaskensis (strain DSM 13593 / LMG 18877 / RB2256) (Sphingomonas alaskensis).